The primary structure comprises 196 residues: CASP-like protein 1D1 (196 aa).

Basic and acidic residues predominate over residues 1 to 18; the sequence is MASTDKPDRESIKSEEAP. The interval 1–22 is disordered; sequence MASTDKPDRESIKSEEAPAAHP. Over 1 to 29 the chain is Cytoplasmic; sequence MASTDKPDRESIKSEEAPAAHPRRSNYSS. Residues 30 to 50 traverse the membrane as a helical segment; sequence VHVALRFLLFAASVTAVVVMV. Over 51 to 84 the chain is Extracellular; the sequence is TAKQTKIVPVPGLPISVPLEAKFSDSPAFLYFIS. A helical membrane pass occupies residues 85–105; it reads ALSVAGLYGILTTLAAISIVL. Residues 106 to 112 are Cytoplasmic-facing; it reads KPAYATR. A helical transmembrane segment spans residues 113–133; sequence FLLHFALLDVLMLGIVASATG. The Extracellular portion of the chain corresponds to 134–167; the sequence is AAGGVAYVGLKGNSHVRWGKVCNVYDKFCQHVGS. The chain crosses the membrane as a helical span at residues 168–188; that stretch reads SIAVALFASVLLVLLTMLSVF. At 189–196 the chain is on the cytoplasmic side; it reads SIYRKIPK.

It belongs to the Casparian strip membrane proteins (CASP) family. Homodimer and heterodimers.

The protein resides in the cell membrane. The chain is CASP-like protein 1D1 from Populus trichocarpa (Western balsam poplar).